Consider the following 192-residue polypeptide: GTP-dependent dephospho-CoA kinase (192 aa).

GTP-binding residues include Asp49, Val50, Val51, Asp68, Lys70, and Glu127.

It belongs to the GTP-dependent DPCK family.

The catalysed reaction is 3'-dephospho-CoA + GTP = GDP + CoA + H(+). Its pathway is cofactor biosynthesis; coenzyme A biosynthesis. Functionally, catalyzes the GTP-dependent phosphorylation of the 3'-hydroxyl group of dephosphocoenzyme A to form coenzyme A (CoA). In Halorubrum lacusprofundi (strain ATCC 49239 / DSM 5036 / JCM 8891 / ACAM 34), this protein is GTP-dependent dephospho-CoA kinase.